The chain runs to 175 residues: Protein LpfE (175 aa).

Residues Met1 to Ala20 form the signal peptide.

This sequence belongs to the fimbrial protein family.

The protein resides in the fimbrium. This chain is Protein LpfE (lpfE), found in Salmonella typhimurium (strain LT2 / SGSC1412 / ATCC 700720).